The sequence spans 401 residues: Subtilisin-like protease 7 (401 aa).

The first 20 residues, 1–20 (MGFITKAIPLALAAASVING), serve as a signal peptide directing secretion. A propeptide spanning residues 21-119 (AEILETRAGV…IERDARVQIN (99 aa)) is cleaved from the precursor. One can recognise an Inhibitor I9 domain in the interval 36 to 118 (KYIVVMNDGM…YIERDARVQI (83 aa)). N-linked (GlcNAc...) asparagine glycosylation occurs at Asn58. The 273-residue stretch at 129–401 (SWGLARVGSR…SKLINNGSGM (273 aa)) folds into the Peptidase S8 domain. Active-site charge relay system residues include Asp161 and His193. N-linked (GlcNAc...) asparagine glycans are attached at residues Asn223 and Asn253. Ser347 acts as the Charge relay system in catalysis. An N-linked (GlcNAc...) asparagine glycan is attached at Asn397.

This sequence belongs to the peptidase S8 family.

Its subcellular location is the secreted. Secreted subtilisin-like serine protease with keratinolytic activity that contributes to pathogenicity. This chain is Subtilisin-like protease 7 (SUB7), found in Trichophyton equinum (Horse ringworm fungus).